Consider the following 131-residue polypeptide: NADH-quinone oxidoreductase subunit I 2 (131 aa).

4Fe-4S ferredoxin-type domains lie at 42-71 and 81-110; these read LKVS…VEAG and ERYE…MTGE. 8 residues coordinate [4Fe-4S] cluster: Cys51, Cys54, Cys57, Cys61, Cys90, Cys93, Cys96, and Cys100.

The protein belongs to the complex I 23 kDa subunit family. In terms of assembly, NDH-1 is composed of 14 different subunits. Subunits NuoA, H, J, K, L, M, N constitute the membrane sector of the complex. It depends on [4Fe-4S] cluster as a cofactor.

Its subcellular location is the cell inner membrane. It catalyses the reaction a quinone + NADH + 5 H(+)(in) = a quinol + NAD(+) + 4 H(+)(out). NDH-1 shuttles electrons from NADH, via FMN and iron-sulfur (Fe-S) centers, to quinones in the respiratory chain. The immediate electron acceptor for the enzyme in this species is believed to be ubiquinone. Couples the redox reaction to proton translocation (for every two electrons transferred, four hydrogen ions are translocated across the cytoplasmic membrane), and thus conserves the redox energy in a proton gradient. The polypeptide is NADH-quinone oxidoreductase subunit I 2 (Geobacter metallireducens (strain ATCC 53774 / DSM 7210 / GS-15)).